We begin with the raw amino-acid sequence, 338 residues long: 3-isopropylmalate dehydrogenase (338 aa).

Positions 88, 98, 122, and 212 each coordinate substrate. Positions 212, 236, and 240 each coordinate Mg(2+). An NAD(+)-binding site is contributed by 272–284 (GSAPDIAGQGIAD).

Belongs to the isocitrate and isopropylmalate dehydrogenases family. LeuB type 2 subfamily. In terms of assembly, homodimer. Requires Mg(2+) as cofactor. Mn(2+) is required as a cofactor.

It is found in the cytoplasm. The catalysed reaction is (2R,3S)-3-isopropylmalate + NAD(+) = 4-methyl-2-oxopentanoate + CO2 + NADH. It functions in the pathway amino-acid biosynthesis; L-leucine biosynthesis; L-leucine from 3-methyl-2-oxobutanoate: step 3/4. Functionally, catalyzes the oxidation of 3-carboxy-2-hydroxy-4-methylpentanoate (3-isopropylmalate) to 3-carboxy-4-methyl-2-oxopentanoate. The product decarboxylates to 4-methyl-2 oxopentanoate. The protein is 3-isopropylmalate dehydrogenase of Corynebacterium jeikeium (strain K411).